We begin with the raw amino-acid sequence, 262 residues long: Encapsulin nanocompartment protein Rv1762c (262 aa).

It belongs to the UPF0145 family.

The protein resides in the encapsulin nanocompartment. In terms of biological role, cargo protein of a type 1 encapsulin nanocompartment possibly involved in protection against oxidative stress. In Mycobacterium tuberculosis (strain ATCC 25618 / H37Rv), this protein is Encapsulin nanocompartment protein Rv1762c.